The primary structure comprises 453 residues: Ribulose bisphosphate carboxylase large chain (453 aa).

Positions 1-2 (MS) are excised as a propeptide. Position 3 is an N-acetylproline (P3). Position 14 is an N6,N6,N6-trimethyllysine (K14). Substrate is bound by residues N123 and T173. The active-site Proton acceptor is the K175. Substrate is bound at residue K177. Positions 201, 203, and 204 each coordinate Mg(2+). K201 carries the N6-carboxylysine modification. The active-site Proton acceptor is the H294. Substrate is bound by residues R295, H327, and S379.

The protein belongs to the RuBisCO large chain family. Type I subfamily. In terms of assembly, heterohexadecamer of 8 large chains and 8 small chains; disulfide-linked. The disulfide link is formed within the large subunit homodimers. Requires Mg(2+) as cofactor. Post-translationally, the disulfide bond which can form in the large chain dimeric partners within the hexadecamer appears to be associated with oxidative stress and protein turnover.

The protein resides in the plastid. It localises to the chloroplast. The enzyme catalyses 2 (2R)-3-phosphoglycerate + 2 H(+) = D-ribulose 1,5-bisphosphate + CO2 + H2O. The catalysed reaction is D-ribulose 1,5-bisphosphate + O2 = 2-phosphoglycolate + (2R)-3-phosphoglycerate + 2 H(+). Functionally, ruBisCO catalyzes two reactions: the carboxylation of D-ribulose 1,5-bisphosphate, the primary event in carbon dioxide fixation, as well as the oxidative fragmentation of the pentose substrate in the photorespiration process. Both reactions occur simultaneously and in competition at the same active site. The polypeptide is Ribulose bisphosphate carboxylase large chain (Galium elongatum (Great marsh bedstraw)).